A 520-amino-acid chain; its full sequence is Sodium-dependent dicarboxylate transporter SdcS (520 aa).

14 helical membrane-spanning segments follow: residues 30–50 (AGQL…LLFF), 55–75 (LPWE…WWIT), 77–97 (AIPI…GHIL), 104–124 (SEYG…AIAM), 160–180 (SMFV…LAII), 207–227 (IGYA…PLII), 242–262 (FAKW…ITWL), 298–318 (KVVQ…EFLL), 323–343 (VTSS…LFVI), 362–382 (ELPW…KGIS), 399–419 (GVSP…LTEV), 428–448 (MILP…LLLM), 452–472 (AMAA…AIIF), and 491–511 (LISA…VLGI).

It belongs to the SLC13A/DASS transporter (TC 2.A.47) family. NADC subfamily.

The protein resides in the cell membrane. In terms of biological role, mediates the transport of the dicarboxylates fumarate, malate, and succinate across the cytoplasmic membrane via a Na(+)-electrochemical gradient. The polypeptide is Sodium-dependent dicarboxylate transporter SdcS (sdcS) (Staphylococcus aureus (strain bovine RF122 / ET3-1)).